The following is a 39-amino-acid chain: SDGRNVAAKAFHRIGRTIRDECCSNPACRVNNPHVCRRR.

Residues 1 to 17 (SDGRNVAAKAFHRIGRT) constitute a propeptide that is removed on maturation. Intrachain disulfides connect cysteine 22–cysteine 28 and cysteine 23–cysteine 36. The ser-Xaa-Pro motif, crucial for potent interaction with nAChR stretch occupies residues 24–26 (SNP). Proline 33 carries the post-translational modification 4-hydroxyproline; in ArIA.

It belongs to the conotoxin A superfamily. In terms of tissue distribution, expressed by the venom duct.

The protein localises to the secreted. Alpha-conotoxins act on postsynaptic membranes, they bind to the nicotinic acetylcholine receptors (nAChR) and thus inhibit them. This toxin acts as a competitive inhibitor and is 3-fold more potent on alpha-7/CHRNA7 nAChRs (IC(50)=6 nM) than on alpha-3-beta-2/CHRNA3-CHRNB2 nAChR (IC(50)=18 nM). Its function is as follows. Acts as a competitive inhibitor and is 33-fold more potent on alpha-7/CHRNA7 nAChRs (IC(50)=1.8 nM) than on alpha-3-beta-2/CHRNA3-CHRNB2 nAChR (IC(50)=60.1 nM). This Conus arenatus (Sand-dusted cone) protein is Alpha-conotoxin ArIA.